The chain runs to 406 residues: Zinc finger CCCH domain-containing protein 15 homolog (406 aa).

The span at 1–11 (MPPKKAPAGPS) shows a compositional bias: low complexity. The segment at 1–70 (MPPKKAPAGP…DKKKDEKEKK (70 aa)) is disordered. A compositionally biased stretch (basic and acidic residues) spans 12 to 28 (KKTEQKKKEKVIEDKTF). A compositionally biased stretch (low complexity) spans 38-50 (QQKFIQQVQKQVQ). Residues 56 to 70 (PRQDGDKKKDEKEKK) are compositionally biased toward basic and acidic residues. A coiled-coil region spans residues 57–82 (RQDGDKKKDEKEKKLADLREMASIFK). C3H1-type zinc fingers lie at residues 94–121 (DPKS…HDLS) and 166–203 (PTTE…HALP). The disordered stretch occupies residues 336-382 (VDGSGTIASSTRLLDQATEAAKTAAAEDGAASDDENPSSSAPANDAA). Composition is skewed to low complexity over residues 352–364 (ATEA…AEDG) and 372–382 (PSSSAPANDAA).

Belongs to the ZC3H15/TMA46 family.

In Drosophila pseudoobscura pseudoobscura (Fruit fly), this protein is Zinc finger CCCH domain-containing protein 15 homolog.